The primary structure comprises 678 residues: MGDSHEDTSATMPEAVAEEVSLFSTTDMVLFSLIVGVLTYWFIFRKKKEEIPEFSKIQTTAPPVKESSFVEKMKKTGRNIIVFYGSQTGTAEEFANRLSKDAHRYGMRGMSADPEEYDLADLSSLPEIDKSLVVFCMATYGEGDPTDNAQDFYDWLQETDVDLTGVKFAVFGLGNKTYEHFNAMGKYVDQRLEQLGAQRIFELGLGDDDGNLEEDFITWREQFWPAVCEFFGVEATGEESSIRQYELVVHEDMDVAKVYTGEMGRLKSYENQKPPFDAKNPFLAAVTANRKLNQGTERHLMHLELDISDSKIRYESGDHVAVYPANDSALVNQIGEILGADLDVIMSLNNLDEESNKKHPFPCPTTYRTALTYYLDITNPPRTNVLYELAQYASEPSEQEHLHKMASSSGEGKELYLSWVVEARRHILAILQDYPSLRPPIDHLCELLPRLQARYYSIASSSKVHPNSVHICAVAVEYEAKSGRVNKGVATSWLRAKEPAGENGGRALVPMFVRKSQFRLPFKSTTPVIMVGPGTGIAPFMGFIQERAWLREQGKEVGETLLYYGCRRSDEDYLYREELARFHKDGALTQLNVAFSREQAHKVYVQHLLKRDREHLWKLIHEGGAHIYVCGDARNMAKDVQNTFYDIVAEFGPMEHTQAVDYVKKLMTKGRYSLDVWS.

Residue Gly2 is modified to N-acetylglycine. Topologically, residues 2-22 (GDSHEDTSATMPEAVAEEVSL) are lumenal. A helical membrane pass occupies residues 23 to 43 (FSTTDMVLFSLIVGVLTYWFI). Residues 44 to 678 (FRKKKEEIPE…KGRYSLDVWS (635 aa)) are Cytoplasmic-facing. The region spanning 80–224 (IIVFYGSQTG…DFITWREQFW (145 aa)) is the Flavodoxin-like domain. FMN contacts are provided by residues 86–91 (SQTGTA), 138–141 (ATYG), 173–182 (LGNKTYEHFN), and Asp208. One can recognise an FAD-binding FR-type domain in the interval 279–521 (KNPFLAAVTA…FVRKSQFRLP (243 aa)). Residue Arg298 participates in NADP(+) binding. FAD is bound by residues Arg424, 454-457 (RYYS), 472-474 (CAV), Tyr478, and 488-491 (GVAT). Residues Thr535, 596–597 (SR), 602–606 (KVYVQ), and Asp639 each bind NADP(+). Trp677 serves as a coordination point for FAD.

This sequence belongs to the NADPH--cytochrome P450 reductase family. It in the N-terminal section; belongs to the flavodoxin family. The protein in the C-terminal section; belongs to the flavoprotein pyridine nucleotide cytochrome reductase family. FAD is required as a cofactor. It depends on FMN as a cofactor.

It localises to the endoplasmic reticulum membrane. It catalyses the reaction 2 oxidized [cytochrome P450] + NADPH = 2 reduced [cytochrome P450] + NADP(+) + H(+). Its function is as follows. This enzyme is required for electron transfer from NADP to cytochrome P450 in microsomes. It can also provide electron transfer to heme oxygenase and cytochrome B5. The chain is NADPH--cytochrome P450 reductase from Rattus norvegicus (Rat).